Reading from the N-terminus, the 554-residue chain is Glucose-6-phosphate isomerase (554 aa).

The active-site Proton donor is Glu-359. Catalysis depends on residues His-390 and Lys-518.

This sequence belongs to the GPI family.

The protein resides in the cytoplasm. It carries out the reaction alpha-D-glucose 6-phosphate = beta-D-fructose 6-phosphate. It participates in carbohydrate biosynthesis; gluconeogenesis. Its pathway is carbohydrate degradation; glycolysis; D-glyceraldehyde 3-phosphate and glycerone phosphate from D-glucose: step 2/4. In terms of biological role, catalyzes the reversible isomerization of glucose-6-phosphate to fructose-6-phosphate. The chain is Glucose-6-phosphate isomerase from Stutzerimonas stutzeri (strain A1501) (Pseudomonas stutzeri).